The following is a 342-amino-acid chain: uncharacterized protein (342 aa).

3 helical membrane-spanning segments follow: residues 35 to 55, 134 to 154, and 161 to 180; these read YFRV…WCFS, LLFL…IIYF, and LFIT…YCFS. Disordered stretches follow at residues 198 to 220 and 311 to 342; these read SSDN…QQYN and IINN…NYTN.

It is found in the membrane. This is an uncharacterized protein from Dictyostelium discoideum (Social amoeba).